A 245-amino-acid polypeptide reads, in one-letter code: NADH-quinone oxidoreductase subunit C (245 aa).

Over residues 1-10 the composition is skewed to basic and acidic residues; sequence MNAPQDRTDD. Disordered stretches follow at residues 1–54 and 217–245; these read MNAP…GYGG and QRKD…RSYQ. Residues 11-28 are compositionally biased toward low complexity; it reads GGVPVPVTPAGATGGAPA. Residues 39 to 54 are compositionally biased toward gly residues; it reads GMFGDQGTGDVSGYGG.

Belongs to the complex I 30 kDa subunit family. In terms of assembly, NDH-1 is composed of 14 different subunits. Subunits NuoB, C, D, E, F, and G constitute the peripheral sector of the complex.

The protein resides in the cell membrane. The catalysed reaction is a quinone + NADH + 5 H(+)(in) = a quinol + NAD(+) + 4 H(+)(out). In terms of biological role, NDH-1 shuttles electrons from NADH, via FMN and iron-sulfur (Fe-S) centers, to quinones in the respiratory chain. The immediate electron acceptor for the enzyme in this species is believed to be a menaquinone. Couples the redox reaction to proton translocation (for every two electrons transferred, four hydrogen ions are translocated across the cytoplasmic membrane), and thus conserves the redox energy in a proton gradient. This Salinispora arenicola (strain CNS-205) protein is NADH-quinone oxidoreductase subunit C.